The following is a 634-amino-acid chain: MINIRFPDGSIREFEAGVNSLDVAKSISPSLAKATMAAYIDDQLKDAKDAINSNCELRLITVKDPEGLEILRHSCAHLLAHAVKELYPNTEVTIGPVVDNGFYYDFSFKESIGEADLPTIEKKMKELAKKSAPVSYRVVPKAEAIEFFKAQGENYKVEIIDSIADEQMKIYTQDNFSDLCRGPHIPNTSVLKAFKLTKLAGAYWRGNSDNEMLTRIYGTCWATKEDLEQYLNMLEEAEKRDHRKIGKVLDLFHFQEDSPGIAFWHDNGVRIWRQVEDYMRASNNKYGCSEIRTPLIADFSLWQKSGHASKYAENMFATKSENRDFAIRPMNCPTCVQVYNTKLHSYRDLPIRMAEFGIVHRNEPSGSLHGLLRVRSFTQDDGHIFCTPEQVEEEVILMVQQCFEVYKDFGFNDFAIKIALRPENRIGDDETWDKSEQMLKNALDANNVSYELLPGEGAFYGPKIEFHLKDAIGRSWQCGTIQLDFSMPQRLGATYIDKNGEKQVPVMLHRAIVGSLERFIGMLIEHYAGNLPLWLAPVQVAVMGISNNQDDYCKEVFIMLEKNGIRAKLDLRNEKIGFKIREHTLLRVPYLVILGKNEQEQKIITIRKHSGEDLGQMSVDDFCAFLDKQIQAKE.

The TGS domain occupies 1–61 (MINIRFPDGS…NSNCELRLIT (61 aa)). The segment at 241 to 532 (DHRKIGKVLD…LIEHYAGNLP (292 aa)) is catalytic. Positions 332, 383, and 509 each coordinate Zn(2+).

Belongs to the class-II aminoacyl-tRNA synthetase family. In terms of assembly, homodimer. Requires Zn(2+) as cofactor.

The protein localises to the cytoplasm. It catalyses the reaction tRNA(Thr) + L-threonine + ATP = L-threonyl-tRNA(Thr) + AMP + diphosphate + H(+). Functionally, catalyzes the attachment of threonine to tRNA(Thr) in a two-step reaction: L-threonine is first activated by ATP to form Thr-AMP and then transferred to the acceptor end of tRNA(Thr). Also edits incorrectly charged L-seryl-tRNA(Thr). This chain is Threonine--tRNA ligase, found in Francisella tularensis subsp. tularensis (strain WY96-3418).